A 128-amino-acid chain; its full sequence is Z-ring associated protein G (128 aa).

The chain crosses the membrane as a helical span at residues 7 to 27 (EIWFSISIAFLIGTLCGVLVM). Residues 37-75 (QIQLKSELASAEAKIEEQKQQLERHFEQSANLLENLAED) are a coiled coil. Positions 105–128 (NHANGDEDNQPRDYSDGSSGLLKS) are disordered. Residues 107–119 (ANGDEDNQPRDYS) show a composition bias toward basic and acidic residues.

It belongs to the ZapG family. Homotetramer. In solution, is primarily monomeric but forms small amounts of stable tetramer and hexadecamer. The crystal structure of the cytosolic region shows a coiled-coil tetramer in the asymmetric unit that is very likely to be a physiologically relevant assembly of the protein.

The protein localises to the cell inner membrane. Functionally, involved in cell division, cell envelope biogenesis and cell shape maintenance. The sequence is that of Z-ring associated protein G from Haemophilus ducreyi (strain 35000HP / ATCC 700724).